The following is a 296-amino-acid chain: MKIRVATRGSKLSLIQTEELLAQIKAVEPDIRFEIVVVKTTGDLIQDKPLFQIGVKGVFEKEVNLAVLRGEADMAVHSLKDLPSDLTPGLALAGYSRRAPPNDALVSPRGYTLETLPRGAVVGTSSVRRAEFLKAARPDLEIKPLRGNVDTRVAKILSGQYDAAVMAAAGLQRLYGGAPPIPAVPLAVEDLPPPPGQGIVAAVAREEDTWLTDLLRRASDRKAAAEAAAERAFLAEVGAGCHVAVGGIARQTPAGIEFTAGYAQGGRKHLVKVYGEDPTEVGRRAARLVAQAMKKT.

Residue Cys241 is modified to S-(dipyrrolylmethanemethyl)cysteine.

This sequence belongs to the HMBS family. Requires dipyrromethane as cofactor.

The enzyme catalyses 4 porphobilinogen + H2O = hydroxymethylbilane + 4 NH4(+). The protein operates within porphyrin-containing compound metabolism; protoporphyrin-IX biosynthesis; coproporphyrinogen-III from 5-aminolevulinate: step 2/4. In terms of biological role, tetrapolymerization of the monopyrrole PBG into the hydroxymethylbilane pre-uroporphyrinogen in several discrete steps. This is Probable porphobilinogen deaminase from Pyrobaculum neutrophilum (strain DSM 2338 / JCM 9278 / NBRC 100436 / V24Sta) (Thermoproteus neutrophilus).